A 382-amino-acid chain; its full sequence is Lipid-A-disaccharide synthase (382 aa).

It belongs to the LpxB family.

The catalysed reaction is 2-N,3-O-bis[(3R)-3-hydroxytetradecanoyl]-alpha-D-glucosaminyl 1-phosphate + UDP-2-N,3-O-bis[(3R)-3-hydroxytetradecanoyl]-alpha-D-glucosamine = lipid A disaccharide (E. coli) + UDP + H(+). It catalyses the reaction a lipid X + a UDP-2-N,3-O-bis[(3R)-3-hydroxyacyl]-alpha-D-glucosamine = a lipid A disaccharide + UDP + H(+). Its pathway is glycolipid biosynthesis; lipid IV(A) biosynthesis; lipid IV(A) from (3R)-3-hydroxytetradecanoyl-[acyl-carrier-protein] and UDP-N-acetyl-alpha-D-glucosamine: step 5/6. In terms of biological role, condensation of UDP-2,3-diacylglucosamine and 2,3-diacylglucosamine-1-phosphate to form lipid A disaccharide, a precursor of lipid A, a phosphorylated glycolipid that anchors the lipopolysaccharide to the outer membrane of the cell. The polypeptide is Lipid-A-disaccharide synthase (Escherichia coli O127:H6 (strain E2348/69 / EPEC)).